Reading from the N-terminus, the 530-residue chain is Inactive ubiquitin carboxyl-terminal hydrolase 17-like protein 8 (530 aa).

The USP domain occupies 80–375 (AGLQNMGNTC…QAYVLFYIQK (296 aa)). Positions 382-392 (SESVSRGREPR) are enriched in basic and acidic residues. 2 disordered regions span residues 382-412 (SESV…KRDH) and 493-530 (NSTD…LVCQ). Residues 495 to 510 (TDQESMNTGTLASLQG) show a composition bias toward polar residues. The span at 511-524 (RTRRSKGKNKHSKR) shows a compositional bias: basic residues.

This sequence belongs to the peptidase C19 family. USP17 subfamily.

It localises to the nucleus. The protein resides in the endoplasmic reticulum. In Homo sapiens (Human), this protein is Inactive ubiquitin carboxyl-terminal hydrolase 17-like protein 8 (USP17L8).